The following is a 281-amino-acid chain: Shikimate dehydrogenase (NADP(+)) (281 aa).

Residues 19-21 (SFS) and Thr66 contribute to the shikimate site. The Proton acceptor role is filled by Lys70. Residues Asn91 and Asp104 each coordinate shikimate. NADP(+) contacts are provided by residues 127–131 (GAGGA) and Ile223. Residue Tyr225 coordinates shikimate. Gly246 is a binding site for NADP(+).

The protein belongs to the shikimate dehydrogenase family. As to quaternary structure, homodimer.

The enzyme catalyses shikimate + NADP(+) = 3-dehydroshikimate + NADPH + H(+). Its pathway is metabolic intermediate biosynthesis; chorismate biosynthesis; chorismate from D-erythrose 4-phosphate and phosphoenolpyruvate: step 4/7. In terms of biological role, involved in the biosynthesis of the chorismate, which leads to the biosynthesis of aromatic amino acids. Catalyzes the reversible NADPH linked reduction of 3-dehydroshikimate (DHSA) to yield shikimate (SA). The polypeptide is Shikimate dehydrogenase (NADP(+)) (Methanobrevibacter smithii (strain ATCC 35061 / DSM 861 / OCM 144 / PS)).